We begin with the raw amino-acid sequence, 567 residues long: Dihydroxy-acid dehydratase (567 aa).

[2Fe-2S] cluster is bound at residue Cys52. Mg(2+) is bound at residue Asp84. Cys125 provides a ligand contact to [2Fe-2S] cluster. Mg(2+)-binding residues include Asp126 and Lys127. N6-carboxylysine is present on Lys127. Residue Cys197 participates in [2Fe-2S] cluster binding. Residue Glu448 participates in Mg(2+) binding. The active-site Proton acceptor is Ser474.

It belongs to the IlvD/Edd family. Homodimer. [2Fe-2S] cluster is required as a cofactor. Mg(2+) serves as cofactor.

The enzyme catalyses (2R)-2,3-dihydroxy-3-methylbutanoate = 3-methyl-2-oxobutanoate + H2O. It carries out the reaction (2R,3R)-2,3-dihydroxy-3-methylpentanoate = (S)-3-methyl-2-oxopentanoate + H2O. Its pathway is amino-acid biosynthesis; L-isoleucine biosynthesis; L-isoleucine from 2-oxobutanoate: step 3/4. It participates in amino-acid biosynthesis; L-valine biosynthesis; L-valine from pyruvate: step 3/4. Functionally, functions in the biosynthesis of branched-chain amino acids. Catalyzes the dehydration of (2R,3R)-2,3-dihydroxy-3-methylpentanoate (2,3-dihydroxy-3-methylvalerate) into 2-oxo-3-methylpentanoate (2-oxo-3-methylvalerate) and of (2R)-2,3-dihydroxy-3-methylbutanoate (2,3-dihydroxyisovalerate) into 2-oxo-3-methylbutanoate (2-oxoisovalerate), the penultimate precursor to L-isoleucine and L-valine, respectively. This chain is Dihydroxy-acid dehydratase, found in Streptococcus pneumoniae serotype 2 (strain D39 / NCTC 7466).